The chain runs to 453 residues: Venom prothrombin activator notecarin-D2 (453 aa).

Residues 1-20 form the signal peptide; sequence MAPQLLLCLILTFLWSLPEA. Positions 21–40 are excised as a propeptide; that stretch reads ESNVFLKSKVANRFLQRTKR. One can recognise a Gla domain in the interval 41–86; it reads SNSLFEEIRPGNIERECIEEKCSKEEAREVFEDNEKTETFWNVYVD. 11 positions are modified to 4-carboxyglutamate: glutamate 46, glutamate 47, glutamate 54, glutamate 56, glutamate 59, glutamate 60, glutamate 65, glutamate 66, glutamate 69, glutamate 72, and glutamate 75. The cysteines at positions 57 and 62 are disulfide-linked. Residues 86-122 form the EGF-like 1; calcium-binding domain; sequence DGDQCSSNPCHYRGTCKDGIGSYTCTCLPNYEGKNCE. 11 cysteine pairs are disulfide-bonded: cysteine 90–cysteine 101, cysteine 95–cysteine 110, cysteine 112–cysteine 121, cysteine 129–cysteine 140, cysteine 136–cysteine 149, cysteine 151–cysteine 164, cysteine 172–cysteine 326, cysteine 216–cysteine 221, cysteine 236–cysteine 252, cysteine 374–cysteine 388, and cysteine 399–cysteine 427. O-linked (Hex...) serine glycosylation occurs at serine 92. Residues 129–164 form the EGF-like 2 domain; the sequence is CRAFNGNCWHFCKRVQSETQCSCAESYLLGVDGHSC. The propeptide at 182–209 is activation peptide; the sequence is REASLPDFVQSQKATVLKKSDNPSPDIR. One can recognise a Peptidase S1 domain in the interval 210–451; sequence IVNGMDCKLG…FIPWIKKIMS (242 aa). The active-site Charge relay system is histidine 251. Asparagine 254 carries an N-linked (GlcNAc...) asparagine glycan. Aspartate 306 (charge relay system) is an active-site residue. Residue serine 403 is the Charge relay system of the active site.

This sequence belongs to the peptidase S1 family. Snake venom subfamily. Heterodimer of a light chain and a heavy chain; disulfide-linked. Gamma-carboxyglutamate residues are formed by vitamin K dependent carboxylation. These residues are essential for the binding of calcium. Expressed by the venom gland.

The protein resides in the secreted. It carries out the reaction Selective cleavage of Arg-|-Thr and then Arg-|-Ile bonds in prothrombin to form thrombin.. In terms of biological role, snake prothrombin activator that attacks the hemostatic system of prey. This protein is functionally similar to blood coagulation factor Xa. The protein is Venom prothrombin activator notecarin-D2 of Notechis scutatus scutatus (Mainland tiger snake).